A 56-amino-acid polypeptide reads, in one-letter code: Large ribosomal subunit protein bL33 (56 aa).

It belongs to the bacterial ribosomal protein bL33 family.

The polypeptide is Large ribosomal subunit protein bL33 (Nocardioides sp. (strain ATCC BAA-499 / JS614)).